The chain runs to 500 residues: Zinc finger protein 689 (500 aa).

Positions 1–24 (MAPPSAPLLEQAPGEVGPTRRRGR) are disordered. In terms of domain architecture, KRAB spans 29 to 100 (LKFADVAVYF…AALDPQEYRR (72 aa)). The tract at residues 110–144 (TRQKNEEKEVFPPKDVPRKGKRGRKPSKPRLIARQ) is disordered. Over residues 112–127 (QKNEEKEVFPPKDVPR) the composition is skewed to basic and acidic residues. Positions 128-137 (KGKRGRKPSK) are enriched in basic residues. The segment at 149–171 (PICPDCGCTFPDLPALESHKCAQ) adopts a C2H2-type 1; degenerate zinc-finger fold. 10 C2H2-type zinc fingers span residues 177-199 (YPCP…RRAH), 205-227 (YVCD…QVIH), 233-255 (YHCP…RTTH), 261-283 (HQCP…QRTH), 289-311 (YTCL…QRIH), 317-339 (YPCP…RRVH), 345-367 (YACE…QLLH), 373-395 (YPCP…RSTH), 401-423 (HACD…RRVH), and 429-451 (YACD…QLLH). Residue Lys-455 forms a Glycyl lysine isopeptide (Lys-Gly) (interchain with G-Cter in SUMO2) linkage. The segment at 457–482 (FPCLECGRCFRQRWSLAVHKCCPNTH) adopts a C2H2-type 12 zinc-finger fold.

This sequence belongs to the krueppel C2H2-type zinc-finger protein family.

It is found in the nucleus. Functionally, may be involved in transcriptional regulation. The chain is Zinc finger protein 689 (Znf689) from Rattus norvegicus (Rat).